The sequence spans 216 residues: Large ribosomal subunit protein uL1 (216 aa).

It belongs to the universal ribosomal protein uL1 family. Part of the 50S ribosomal subunit.

Binds directly to 23S rRNA. Probably involved in E site tRNA release. Its function is as follows. Protein L1 is also a translational repressor protein, it controls the translation of its operon by binding to its mRNA. The sequence is that of Large ribosomal subunit protein uL1 from Thermococcus kodakarensis (strain ATCC BAA-918 / JCM 12380 / KOD1) (Pyrococcus kodakaraensis (strain KOD1)).